Here is a 416-residue protein sequence, read N- to C-terminus: E3 ubiquitin-protein ligase makorin-2 (416 aa).

C3H1-type zinc fingers lie at residues 2–29 and 31–58; these read STKQ…HDLA and SKPS…HTRP. The span at 113-122 shows a compositional bias: basic and acidic residues; it reads NLSGMAERKT. Positions 113–142 are disordered; it reads NLSGMAERKTQPSMVSNPGSCSDPQPSPEM. Residues 123–136 show a composition bias toward polar residues; it reads QPSMVSNPGSCSDP. Phosphoserine is present on serine 139. A C3H1-type 3 zinc finger spans residues 165–192; sequence SNEQQLCPYAAAGECRFGDACVYLHGEV. A makorin-type Cys-His region spans residues 193 to 222; it reads CEICRLQVLHPFDPEQRKAHEKICMLTFEH. An RING-type zinc finger spans residues 238 to 292; it reads CSICMEVILEKASASERRFGILSNCNHTYCLSCIRQWRCAKQFENPIIKSCPECR. A C3H1-type 4 zinc finger spans residues 321-350; sequence GMGKKACKYFEQGKGTCPFGSKCLYRHAYP.

In terms of assembly, interacts with PDLIM2 (via LIM zinc-binding domain). Interacts with RELA. In terms of tissue distribution, expressed in sperm, with significantly reduced expression in sperm of patients with oligoasthenoteratozoospermia (at protein level). Widely expressed with expression in testis, ovary, small intestine, colon, peripheral blood leukocytes, fetal liver, bone marrow, thymus, lymph node and spleen.

It is found in the cytoplasm. Its subcellular location is the nucleus. It carries out the reaction S-ubiquitinyl-[E2 ubiquitin-conjugating enzyme]-L-cysteine + [acceptor protein]-L-lysine = [E2 ubiquitin-conjugating enzyme]-L-cysteine + N(6)-ubiquitinyl-[acceptor protein]-L-lysine.. It participates in protein modification; protein ubiquitination. Its function is as follows. E3 ubiquitin ligase catalyzing the covalent attachment of ubiquitin moieties onto substrate proteins. Promotes the polyubiquitination and proteasome-dependent degradation of RELA/p65, thereby suppressing RELA-mediated NF-kappaB transactivation and negatively regulating inflammatory responses. Plays a role in the regulation of spermiation and in male fertility. The polypeptide is E3 ubiquitin-protein ligase makorin-2 (MKRN2) (Homo sapiens (Human)).